We begin with the raw amino-acid sequence, 1000 residues long: MNFSPLPNRVIDAPKHLKTRMIQVRSSYFGYSLVIRPTSIFVGAPRAQSTLESQGSINETGAVYRCPLASGSCSHYVLNDKLNKQFQWLGGSMDGGTKDTDKLLVCAPRFFVPKNKNYGQMRGICYWVRDTVADTPPLSDVRTISLIPSQAEEHFMLELGLSAHVTDDNSGFLIGAPGVRSWKGSVLVHRGEDLAAQGSYAVKMLDSWDWVKNHFTYVGYALSSGYFSSNNRTSLLYVTTAPSSVLNTGKAYIFDVVGEIVRKLHVFHGEQLGEYFGYSVVAEDLNGDGLTDVVVSAPLNALGDSYDVGAIYVFINKGLFKFEKKIIRLPLSSGARFGSSLSKVGDINHDGYNDLAVGAPFAGNGAVFIFLGSEHGLRDEPSQRLDAPSREPGPYGAHMFGQGLSRGSDIDGNGFNDLAIGAPGAEAVYLYRAYPVVKIHATVRSESRAIRPEQETITVTACYRLETTSKARQMQQQELTFRMTIDELLQRVSFAPMRTNEVSFQAQAGLSGSCRNFSVGVHYTGGIFTPIDLELHYELAKKIPHSHEAFCESCAVVDPLEPKYATGTLSFMTGCAAHVCVSDLQLSSKDVNSSFIFGSLEVLSFSYEITNSGEPAYVAQFNVTSSARLPFAKVPGNCRVRHEVMLCDLNGGRALARGDSESLTIIFDVTQLSGQSLTIEAAVSSAGMDQNPKDNTMSTTISLREYAEIDASGGPIDGHIALKEYPYSAEVNNSYEFKSHGPSIIDELTVYVDVPIAYTVTGSAGIKSIFNISSLQMQATHGSELVPIKLYDQTNTLAKEYPLEDSSRRANRKRRELQQDQYAIMPDVNISDILTKENLPANRTLVLDCLRGNWTICVRSQMRVQLKPEQPIDLRISFKVDLNDFVNTFDYLVIFTNVEMFKEGDSTSIALKRNLKPNVIFNYSETPLPIWYIILSLIAGHLLLGAMTYILYKLRFFKRGKKEELKRLLEEHRSETKEPATDCEGNQEEINVEMHSDLEN.

FG-GAP repeat units follow at residues 15-74, 75-137, 145-198, 199-261, 262-323, 324-379, and 386-448; these read KHLK…GSCS, HYVL…DTPP, SLIP…AAQG, SYAV…GEIV, RKLH…FKFE, KKII…GLRD, and DAPS…SESR. Residue Asn58 is glycosylated (N-linked (GlcNAc...) asparagine). Asn231 carries an N-linked (GlcNAc...) asparagine glycan. 9 N-linked (GlcNAc...) asparagine glycosylation sites follow: Asn516, Asn592, Asn622, Asn732, Asn771, Asn829, Asn842, Asn853, and Asn922. Residues 930-950 traverse the membrane as a helical segment; the sequence is IWYIILSLIAGHLLLGAMTYI. At 951-1000 the chain is on the cytoplasmic side; sequence LYKLRFFKRGKKEELKRLLEEHRSETKEPATDCEGNQEEINVEMHSDLEN. Positions 971–980 are enriched in basic and acidic residues; that stretch reads EHRSETKEPA. The interval 971–1000 is disordered; the sequence is EHRSETKEPATDCEGNQEEINVEMHSDLEN.

This sequence belongs to the integrin alpha chain family. In terms of assembly, heterodimer of an alpha and a beta subunit. Alpha-PS5 associates with beta-PS. In terms of tissue distribution, expressed in all follicle cells overlying the oocyte during mid-oogenesis, the strongest expression is observed in the cells covering the anterior end of the oocyte and in the cells forming the dorsal appendages. After completion of oocyte enlargement, expression in main body follicle cells is down-regulated but persists strongly in the dorsal appendage forming cells. Expressed in lamellocytes.

It is found in the membrane. Functionally, possible role in cell-cell interactions. Minor involvement in the establishment of the oocyte anterior-posterior length. This is Integrin alpha-PS5 from Drosophila melanogaster (Fruit fly).